A 455-amino-acid polypeptide reads, in one-letter code: Chromosomal replication initiator protein DnaA (455 aa).

A domain I, interacts with DnaA modulators region spans residues 1–75; that stretch reads MDTNNNIEKE…EILSQNKVGM (75 aa). Residues 75–106 form a domain II region; it reads MHLAHSVDVRIEVAPKIQISAQPNINYKAVKT. Residues 107–321 form a domain III, AAA+ region region; it reads SVKDSYTFEN…GAIIKISVNA (215 aa). 4 residues coordinate ATP: Gly151, Gly153, Lys154, and Thr155. Residues 322-455 are domain IV, binds dsDNA; sequence NLMNAPIDLN…DKKTAFHSSE (134 aa).

The protein belongs to the DnaA family. In terms of assembly, oligomerizes as a right-handed, spiral filament on DNA at oriC.

The protein resides in the cytoplasm. Functionally, plays an essential role in the initiation and regulation of chromosomal replication. ATP-DnaA binds to the origin of replication (oriC) to initiate formation of the DNA replication initiation complex once per cell cycle. Binds the DnaA box (a 9 base pair repeat at the origin) and separates the double-stranded (ds)DNA. Forms a right-handed helical filament on oriC DNA; dsDNA binds to the exterior of the filament while single-stranded (ss)DNA is stabiized in the filament's interior. The ATP-DnaA-oriC complex binds and stabilizes one strand of the AT-rich DNA unwinding element (DUE), permitting loading of DNA polymerase. After initiation quickly degrades to an ADP-DnaA complex that is not apt for DNA replication. Binds acidic phospholipids. The sequence is that of Chromosomal replication initiator protein DnaA from Helicobacter pylori (strain Shi470).